A 317-amino-acid chain; its full sequence is tRNA dimethylallyltransferase (317 aa).

14–21 is a binding site for ATP; that stretch reads GPTAVGKT. Position 16–21 (16–21) interacts with substrate; sequence TAVGKT. Residues 39 to 42 are interaction with substrate tRNA; it reads DSMQ.

The protein belongs to the IPP transferase family. In terms of assembly, monomer. Mg(2+) serves as cofactor.

The catalysed reaction is adenosine(37) in tRNA + dimethylallyl diphosphate = N(6)-dimethylallyladenosine(37) in tRNA + diphosphate. Catalyzes the transfer of a dimethylallyl group onto the adenine at position 37 in tRNAs that read codons beginning with uridine, leading to the formation of N6-(dimethylallyl)adenosine (i(6)A). This Bacillus cereus (strain AH187) protein is tRNA dimethylallyltransferase.